A 428-amino-acid polypeptide reads, in one-letter code: Dihydroorotase (428 aa).

Zn(2+) contacts are provided by His59 and His61. Residues 61-63 (HLR) and Asn93 each bind substrate. Residues Asp151, His178, and His231 each contribute to the Zn(2+) site. A substrate-binding site is contributed by Asn277. Asp304 contributes to the Zn(2+) binding site. Asp304 is a catalytic residue. Residues His308 and 322-323 (FG) contribute to the substrate site.

This sequence belongs to the metallo-dependent hydrolases superfamily. DHOase family. Class I DHOase subfamily. It depends on Zn(2+) as a cofactor.

It catalyses the reaction (S)-dihydroorotate + H2O = N-carbamoyl-L-aspartate + H(+). The protein operates within pyrimidine metabolism; UMP biosynthesis via de novo pathway; (S)-dihydroorotate from bicarbonate: step 3/3. Its function is as follows. Catalyzes the reversible cyclization of carbamoyl aspartate to dihydroorotate. This Bacillus cereus (strain ATCC 10987 / NRS 248) protein is Dihydroorotase.